Consider the following 263-residue polypeptide: Elongin-A (263 aa).

Disordered stretches follow at residues 112 to 147 (KLEQ…YCPK) and 170 to 263 (SATS…PKRI). Polar residues-rich tracts occupy residues 186-206 (RSSS…NTYP) and 214-229 (SFTS…VKTQ). Positions 230 to 245 (PSSSSSPSISRPTSFP) are enriched in low complexity. The span at 253-263 (SRFSSQVPKRI) shows a compositional bias: polar residues.

It belongs to the ELA1 family. As to quaternary structure, heterodimer with elc1. Component of a CRL3 E3 ubiquitin ligase complex consisting of a cullin, the linker protein elc1, the substrate receptor pof4/ela1, and the RING protein rbx1. Interacts with skp1.

In terms of biological role, as part of the CRL3 E3 ubiquitin ligase complex; polyubiquitylates monoubiquitylated RNA polymerase II subunit rpb1 to trigger its proteolysis; plays a role in global genomic repair. This is Elongin-A (pof4) from Schizosaccharomyces pombe (strain 972 / ATCC 24843) (Fission yeast).